Here is a 368-residue protein sequence, read N- to C-terminus: tRNA-specific 2-thiouridylase MnmA (368 aa).

Residues 10–17 (AMSGGIDS) and methionine 36 contribute to the ATP site. Cysteine 106 functions as the Nucleophile in the catalytic mechanism. An intrachain disulfide couples cysteine 106 to cysteine 203. Glycine 130 lines the ATP pocket. Positions 152–154 (KDQ) are interaction with tRNA. Cysteine 203 functions as the Cysteine persulfide intermediate in the catalytic mechanism. An interaction with tRNA region spans residues 313-314 (RY).

The protein belongs to the MnmA/TRMU family.

Its subcellular location is the cytoplasm. The catalysed reaction is S-sulfanyl-L-cysteinyl-[protein] + uridine(34) in tRNA + AH2 + ATP = 2-thiouridine(34) in tRNA + L-cysteinyl-[protein] + A + AMP + diphosphate + H(+). In terms of biological role, catalyzes the 2-thiolation of uridine at the wobble position (U34) of tRNA, leading to the formation of s(2)U34. The chain is tRNA-specific 2-thiouridylase MnmA from Cytophaga hutchinsonii (strain ATCC 33406 / DSM 1761 / CIP 103989 / NBRC 15051 / NCIMB 9469 / D465).